The primary structure comprises 376 residues: D-alanine--D-alanine ligase B (376 aa).

In terms of domain architecture, ATP-grasp spans 155–361 (KRLMRDAGLP…QTDLMDKLIA (207 aa)). Residue 184 to 239 (AALGTPDLFVKPANLGSSVGVSRARSEEEFAASCALAFRYDRKILVEQALNGAREI) coordinates ATP. Residues Asp-316, Glu-328, and Asn-330 each coordinate Mg(2+).

It belongs to the D-alanine--D-alanine ligase family. Mg(2+) serves as cofactor. Requires Mn(2+) as cofactor.

The protein resides in the cytoplasm. It catalyses the reaction 2 D-alanine + ATP = D-alanyl-D-alanine + ADP + phosphate + H(+). It participates in cell wall biogenesis; peptidoglycan biosynthesis. Functionally, cell wall formation. The polypeptide is D-alanine--D-alanine ligase B (Bradyrhizobium diazoefficiens (strain JCM 10833 / BCRC 13528 / IAM 13628 / NBRC 14792 / USDA 110)).